The chain runs to 505 residues: Apolipoprotein N-acyltransferase (505 aa).

Helical transmembrane passes span 23-43 (LLAL…AVLY), 58-78 (GWWF…VSMN), 85-105 (PLLA…FFAL), 125-145 (LCFA…LTGF), 162-182 (LAPL…AALL), and 192-212 (PSFL…GLAL). Residues 230-469 (IQGNVEQDLK…QAVLYGEVVP (240 aa)) enclose the CN hydrolase domain. The active-site Proton acceptor is the Glu-269. Lys-329 is an active-site residue. The active-site Nucleophile is Cys-381. A helical membrane pass occupies residues 482–502 (WPLAIVCALLLGWALLAGRIA).

Belongs to the CN hydrolase family. Apolipoprotein N-acyltransferase subfamily.

The protein resides in the cell inner membrane. The enzyme catalyses N-terminal S-1,2-diacyl-sn-glyceryl-L-cysteinyl-[lipoprotein] + a glycerophospholipid = N-acyl-S-1,2-diacyl-sn-glyceryl-L-cysteinyl-[lipoprotein] + a 2-acyl-sn-glycero-3-phospholipid + H(+). The protein operates within protein modification; lipoprotein biosynthesis (N-acyl transfer). In terms of biological role, catalyzes the phospholipid dependent N-acylation of the N-terminal cysteine of apolipoprotein, the last step in lipoprotein maturation. The polypeptide is Apolipoprotein N-acyltransferase (Pseudomonas putida (strain ATCC 47054 / DSM 6125 / CFBP 8728 / NCIMB 11950 / KT2440)).